A 217-amino-acid polypeptide reads, in one-letter code: Large ribosomal subunit protein uL1 (217 aa).

The protein belongs to the universal ribosomal protein uL1 family. In terms of assembly, part of the 50S ribosomal subunit.

Its function is as follows. Binds directly to 23S rRNA. Probably involved in E site tRNA release. Functionally, protein L1 is also a translational repressor protein, it controls the translation of its operon by binding to its mRNA. The protein is Large ribosomal subunit protein uL1 of Hyperthermus butylicus (strain DSM 5456 / JCM 9403 / PLM1-5).